Consider the following 380-residue polypeptide: Flagellar P-ring protein (380 aa).

Positions 1–35 (MRFFTQSPFPLRTLTRRLTAFVCVGLLLLPGFTLA) are cleaved as a signal peptide.

Belongs to the FlgI family. As to quaternary structure, the basal body constitutes a major portion of the flagellar organelle and consists of four rings (L,P,S, and M) mounted on a central rod.

The protein localises to the periplasm. It localises to the bacterial flagellum basal body. In terms of biological role, assembles around the rod to form the L-ring and probably protects the motor/basal body from shearing forces during rotation. The polypeptide is Flagellar P-ring protein (Gluconobacter oxydans (strain 621H) (Gluconobacter suboxydans)).